Here is a 498-residue protein sequence, read N- to C-terminus: Flavin-dependent halogenase otaD (498 aa).

Glycine 14, glycine 17, and glutamate 47 together coordinate FAD. 2 residues coordinate chloride: serine 326 and glycine 327. Valine 328 is a binding site for FAD.

It belongs to the flavin-dependent halogenase family.

The catalysed reaction is ochratoxin B + FADH2 + chloride + O2 = ochratoxin A + FAD + 2 H2O. The protein operates within mycotoxin biosynthesis. Its function is as follows. Flavin-dependent halogenase; part of the gene cluster that mediates the biosynthesis of ochratoxin A (OTA), a mycotoxin composed of a chlorinated type I polyketide dihydroisocoumarin moiety linked to L-phenylalanine, and demonstrated to have nephrotoxic, immunotoxic, genotoxic, neurotoxic, and teratogenic properties. OtaD chlorinates ochratoxin B (OTB) at the C-5 position to form OTA. The pathway begins with the highly reducing polyketide synthase otaA that catalyzes the formation of the isocoumarin group during the initial stages of biosynthesis, starting from one acetate and 4 malonate units, to originate the characteristic pentaketide skeleton 7-methylmellein (7-MM) of the OTA molecule. The newly identified cyclase otaY might be involved in the polyketide cyclization reaction during the initial steps of the OTA biosynthesis. 7-MM is then oxidized into 7-carboxymellein (also called ochratoxin beta) by the cytochrome P450 monooxygenase otaC. The NRPS encoded by the otaB gene is involved in the linking of phenylalanine to the dihydroisocoumarin ring. The reaction catalyzed by NRPS results in the production of ochratoxin B (OTB), which is the non-chlorinated analog of OTA and which subsequently serves as the substrate of the halogenase otaD for chlorination activity to form the final molecular structure of OTA, containing a chlorine atom in the C-5 position of the molecule. This chain is Flavin-dependent halogenase otaD, found in Aspergillus carbonarius (strain ITEM 5010).